The following is a 539-amino-acid chain: Laccase-1 (539 aa).

Positions 1 to 21 (MAFTAISLFLAALGVINTAFA) are cleaved as a signal peptide. Plastocyanin-like domains lie at 37–154 (AEVN…YDPE) and 166–309 (ESTV…HYLG). N-linked (GlcNAc...) asparagine glycosylation occurs at Asn-78. Cu cation is bound by residues His-88 and His-90. 2 cysteine pairs are disulfide-bonded: Cys-109-Cys-513 and Cys-141-Cys-228. N-linked (GlcNAc...) asparagine glycosylation occurs at Asn-120. Residues His-133 and His-135 each coordinate Cu cation. Asn-202, Asn-233, Asn-240, Asn-293, Asn-318, Asn-353, Asn-385, and Asn-405 each carry an N-linked (GlcNAc...) asparagine glycan. A Plastocyanin-like 3 domain is found at 374–495 (SPTVPVLLQI…GFAVVMAEDP (122 aa)). Positions 421, 424, and 426 each coordinate Cu cation. Asn-457 is a glycosylation site (N-linked (GlcNAc...) asparagine). His-476, Cys-477, His-478, and His-482 together coordinate Cu cation. Asn-532 carries N-linked (GlcNAc...) asparagine glycosylation.

This sequence belongs to the multicopper oxidase family. Cu cation serves as cofactor.

The protein resides in the secreted. It carries out the reaction 4 hydroquinone + O2 = 4 benzosemiquinone + 2 H2O. Inhibited by chloride ions. Inhibited by citrate. Inhibited by oxalate. Activated by acetate. Its function is as follows. In vitro, has activity towards 2,2'-azino-bis(3-ethylbenzthiazoline-6-sulfonic acid) (ABTS), 2,6-dimethoxy-phenol, and guaiacol. Although brown rot fungi preferentially degrade hemicellulose and cellulose, the enzyme may contribute to generating small amounts of lignin breakdown products required for catalytic reactions. In Fomitopsis schrenkii (Brown rot fungus), this protein is Laccase-1.